A 165-amino-acid polypeptide reads, in one-letter code: uncharacterized protein (165 aa).

The disordered stretch occupies residues 68-107 (LEGAPEWAAPHPEEQRRSPPACSQHTPPLPSTPTGPPPCS). Positions 94 to 107 (PPLPSTPTGPPPCS) are enriched in pro residues.

This is an uncharacterized protein from Homo sapiens (Human).